Consider the following 256-residue polypeptide: MTNELSNAAGASQQGPAASSFSADTPPRTTAGGDVLVLLLIDVAPAARLWGYGRFVAGTTPALGEPGARFAKQLGTGYEGGFGLRPSATRQGLFVLFEDEAAADAFIGRSELVQTYRRNARELCIVKARPYSARGSWDGQKLRVGSPAPVDGPVAALTRASIRPSQAHRFWPNAGPSQDSLERAAGCRLAVGLGEAPFLRQATFSVWDSVAAMDAYARTGAHQRAIVASRDFFSESMFVRFVPLSIEGVWKGRRYG.

A compositionally biased stretch (low complexity) spans 1–23; the sequence is MTNELSNAAGASQQGPAASSFSA. A disordered region spans residues 1-26; that stretch reads MTNELSNAAGASQQGPAASSFSADTP.

It belongs to the CrtA family. Heme is required as a cofactor.

It carries out the reaction spheroidene + 4 reduced [2Fe-2S]-[ferredoxin] + 2 O2 + 4 H(+) = spheroiden-2-one + 4 oxidized [2Fe-2S]-[ferredoxin] + 3 H2O. It catalyses the reaction spirilloxanthin + 4 reduced [2Fe-2S]-[ferredoxin] + 2 O2 + 4 H(+) = 2-oxospirilloxanthin + 4 oxidized [2Fe-2S]-[ferredoxin] + 3 H2O. The enzyme catalyses 2-oxospirilloxanthin + 4 reduced [2Fe-2S]-[ferredoxin] + 2 O2 + 4 H(+) = 2,2'-dioxospirilloxanthin + 4 oxidized [2Fe-2S]-[ferredoxin] + 3 H2O. The catalysed reaction is spheroidene + 2 reduced [2Fe-2S]-[ferredoxin] + O2 + 2 H(+) = 2-hydroxyspheroidene + 2 oxidized [2Fe-2S]-[ferredoxin] + H2O. It carries out the reaction 2-hydroxyspheroidene + 2 reduced [2Fe-2S]-[ferredoxin] + O2 + 2 H(+) = 2,2-dihydroxyspheroidene + 2 oxidized [2Fe-2S]-[ferredoxin] + H2O. It catalyses the reaction 2,2-dihydroxyspheroidene = spheroiden-2-one + H2O. The enzyme catalyses spirilloxanthin + 2 reduced [2Fe-2S]-[ferredoxin] + O2 + 2 H(+) = 2-hydroxyspirilloxanthin + 2 oxidized [2Fe-2S]-[ferredoxin] + H2O. The catalysed reaction is 2-hydroxyspirilloxanthin + 2 reduced [2Fe-2S]-[ferredoxin] + O2 + 2 H(+) = 2,2-dihydroxyspirilloxanthin + 2 oxidized [2Fe-2S]-[ferredoxin] + H2O. It carries out the reaction 2,2-dihydroxyspirilloxanthin = 2-oxospirilloxanthin + H2O. It catalyses the reaction 2-oxospirilloxanthin + 2 reduced [2Fe-2S]-[ferredoxin] + O2 + 2 H(+) = 2'-hydroxy-2-oxospirilloxanthin + 2 oxidized [2Fe-2S]-[ferredoxin] + H2O. The enzyme catalyses 2'-hydroxy-2-oxospirilloxanthin + 2 reduced [2Fe-2S]-[ferredoxin] + O2 + 2 H(+) = 2',2'-dihydroxy-2-oxospirilloxanthin + 2 oxidized [2Fe-2S]-[ferredoxin] + H2O. The catalysed reaction is 2',2'-dihydroxy-2-oxospirilloxanthin = 2,2'-dioxospirilloxanthin + H2O. It participates in carotenoid biosynthesis; spheroidene biosynthesis. It functions in the pathway carotenoid biosynthesis; spirilloxanthin biosynthesis. Its function is as follows. Involved in the biosynthesis of the carotenoids spheroidene and spirilloxanthin. Catalyzes the introduction of one keto group at the C-2 position of spheroidene and two keto groups at the C-2 and C-2' positions of spirilloxanthin. This Rubrivivax gelatinosus (Rhodocyclus gelatinosus) protein is Spheroidene monooxygenase.